Reading from the N-terminus, the 278-residue chain is Endoplasmic reticulum junction formation protein lunapark (278 aa).

At 1–45 (MFSALGKWVRGSRNDKDFVTKYTADLSQITSQIHQLDVALKKSQS) the chain is on the cytoplasmic side. Residues 46-66 (ILSQWQSNLTFYGIALTVLAL) form a helical membrane-spanning segment. The Lumenal portion of the chain corresponds to 67–77 (SYTYWEYHGYR). Residues 78 to 98 (PYLVVTALLCIGSLILFKWAL) form a helical membrane-spanning segment. The Cytoplasmic portion of the chain corresponds to 99 to 278 (TKLYAFYNNN…PSQSEKEKTK (180 aa)). The stretch at 107 to 183 (NNRLRKLAKL…ELEKFKKESH (77 aa)) forms a coiled coil. The C4-type; plays a role in ER morphology zinc-finger motif lies at 223–247 (CPQCHWKSNCYRLASKPIIFICPHC). The tract at residues 258–278 (EDAIEAKQPAQPSQSEKEKTK) is disordered.

This sequence belongs to the lunapark family. Interacts with RTN1; this interaction is negatively regulated by SEY1. Interacts with SEY1 and YOP1.

It is found in the endoplasmic reticulum membrane. Plays a role in tubular endoplasmic reticulum network formation and maintenance. Works in conjunction with the ER shaping proteins (reticulons RTN1 and RTN2, YOP1), and in antagonism to SEY1 to maintain the network in a dynamic equilibrium. May counterbalance SEY1-directed polygon formation by promoting polygon loss through ring closure. This is Endoplasmic reticulum junction formation protein lunapark (LNP1) from Saccharomyces cerevisiae (strain ATCC 204508 / S288c) (Baker's yeast).